A 541-amino-acid chain; its full sequence is Putative asparagine synthetase [glutamine-hydrolyzing] 1 (541 aa).

Residue Cys-2 is the For GATase activity of the active site. Residues Cys-2 to Asp-213 form the Glutamine amidotransferase type-2 domain. Residues Arg-68–Val-72, Asn-92–Glu-94, and Asp-116 contribute to the L-glutamine site. Residues Val-289 and Ser-363–Gly-364 contribute to the ATP site.

The protein belongs to the asparagine synthetase family.

It carries out the reaction L-aspartate + L-glutamine + ATP + H2O = L-asparagine + L-glutamate + AMP + diphosphate + H(+). It functions in the pathway amino-acid biosynthesis; L-asparagine biosynthesis; L-asparagine from L-aspartate (L-Gln route): step 1/1. This is Putative asparagine synthetase [glutamine-hydrolyzing] 1 from Methanocaldococcus jannaschii (strain ATCC 43067 / DSM 2661 / JAL-1 / JCM 10045 / NBRC 100440) (Methanococcus jannaschii).